Reading from the N-terminus, the 181-residue chain is Acetolactate synthase small subunit (181 aa).

Residues 4 to 78 (TLSVLVEDES…NVLKIQDITN (75 aa)) enclose the ACT domain.

This sequence belongs to the acetolactate synthase small subunit family. In terms of assembly, dimer of large and small chains.

The protein resides in the plastid. The protein localises to the chloroplast. The enzyme catalyses 2 pyruvate + H(+) = (2S)-2-acetolactate + CO2. It participates in amino-acid biosynthesis; L-isoleucine biosynthesis; L-isoleucine from 2-oxobutanoate: step 1/4. The protein operates within amino-acid biosynthesis; L-valine biosynthesis; L-valine from pyruvate: step 1/4. In Galdieria sulphuraria (Red alga), this protein is Acetolactate synthase small subunit (ilvH).